A 521-amino-acid polypeptide reads, in one-letter code: Alkyl hydroperoxide reductase subunit F (521 aa).

213–228 (DVLVVGGGPAGAAAAI) is a binding site for FAD. C344 and C347 are oxidised to a cystine. 356-370 (RVAVIGGGNSGVEAA) provides a ligand contact to NAD(+). 477–487 (TSLPGIFAAGD) is an FAD binding site.

The protein belongs to the class-II pyridine nucleotide-disulfide oxidoreductase family. In terms of assembly, homodimer. FAD serves as cofactor.

In terms of biological role, serves to protect the cell against DNA damage by alkyl hydroperoxides. It can use either NADH or NADPH as electron donor for direct reduction of redox dyes or of alkyl hydroperoxides when combined with the AhpC protein. In Pseudomonas aeruginosa (strain ATCC 15692 / DSM 22644 / CIP 104116 / JCM 14847 / LMG 12228 / 1C / PRS 101 / PAO1), this protein is Alkyl hydroperoxide reductase subunit F (ahpF).